Consider the following 436-residue polypeptide: Gamma-glutamyl phosphate reductase (436 aa).

Belongs to the gamma-glutamyl phosphate reductase family.

It is found in the cytoplasm. It catalyses the reaction L-glutamate 5-semialdehyde + phosphate + NADP(+) = L-glutamyl 5-phosphate + NADPH + H(+). It functions in the pathway amino-acid biosynthesis; L-proline biosynthesis; L-glutamate 5-semialdehyde from L-glutamate: step 2/2. Its function is as follows. Catalyzes the NADPH-dependent reduction of L-glutamate 5-phosphate into L-glutamate 5-semialdehyde and phosphate. The product spontaneously undergoes cyclization to form 1-pyrroline-5-carboxylate. The polypeptide is Gamma-glutamyl phosphate reductase (Prochlorococcus marinus (strain MIT 9312)).